The primary structure comprises 331 residues: Aflatoxin B1 aldehyde reductase member 4 (331 aa).

Asp-44 is an NADP(+) binding site. Tyr-49 serves as the catalytic Proton donor. Residue Ser-85 is modified to Phosphoserine. A substrate-binding site is contributed by His-113. NADP(+)-binding positions include 143–144, Gln-169, 198–208, and Arg-222; these read SN and NPLAGGLLTGK. Tyr-232 is a substrate binding site. An NADP(+)-binding site is contributed by 290 to 298; sequence SSLEQLEQN.

The protein belongs to the aldo/keto reductase family. Aldo/keto reductase 2 subfamily. Mainly expressed in uterus.

Its function is as follows. Can reduce the dialdehyde protein-binding form of aflatoxin B1 (AFB1) to the non-binding AFB1 dialcohol. May be involved in protection of liver against the toxic and carcinogenic effects of AFB1, a potent hepatocarcinogen. In Homo sapiens (Human), this protein is Aflatoxin B1 aldehyde reductase member 4 (AKR7L).